A 480-amino-acid polypeptide reads, in one-letter code: Histone deacetylase 1 (480 aa).

The tract at residues arginine 9–aspartate 321 is histone deacetylase. The 1D-myo-inositol 1,4,5,6-tetrakisphosphate site is built by glycine 27 and lysine 31. The active site involves histidine 141. Residues aspartate 176, histidine 178, and aspartate 264 each contribute to the Zn(2+) site. Residue arginine 270 coordinates 1D-myo-inositol 1,4,5,6-tetrakisphosphate. The tract at residues alanine 376–threonine 480 is disordered. Acidic residues predominate over residues alanine 388–aspartate 400. Residues proline 401–cysteine 416 show a composition bias toward basic and acidic residues. Over residues aspartate 417–glycine 427 the composition is skewed to acidic residues. Residues lysine 455–threonine 480 are compositionally biased toward basic and acidic residues.

It belongs to the histone deacetylase family. HD type 1 subfamily. Zn(2+) is required as a cofactor.

Its subcellular location is the nucleus. The enzyme catalyses N(6)-acetyl-L-lysyl-[histone] + H2O = L-lysyl-[histone] + acetate. It carries out the reaction N(6)-acetyl-L-lysyl-[protein] + H2O = L-lysyl-[protein] + acetate. The catalysed reaction is N(6)-(2E)-butenoyl-L-lysyl-[protein] + H2O = (2E)-2-butenoate + L-lysyl-[protein]. It catalyses the reaction N(6)-[(S)-lactoyl]-L-lysyl-[protein] + H2O = (S)-lactate + L-lysyl-[protein]. Inositol tetraphosphate (1D-myo-inositol 1,4,5,6-tetrakisphosphate) may act as an intermolecular glue between HDAC1 and N-Cor repressor complex components. In terms of biological role, histone deacetylase that catalyzes the deacetylation of lysine residues on the N-terminal part of the core histones (H2A, H2B, H3 and H4). Histone deacetylation gives a tag for epigenetic repression and plays an important role in transcriptional regulation, cell cycle progression and developmental events. Histone deacetylases act via the formation of large multiprotein complexes. Also functions as a deacetylase for non-histone proteins. In addition to protein deacetylase activity, also has protein-lysine deacylase activity: acts as a protein decrotonylase and delactylase by mediating decrotonylation ((2E)-butenoyl) and delactylation (lactoyl) of histones, respectively. This is Histone deacetylase 1 (HDAC1) from Gallus gallus (Chicken).